We begin with the raw amino-acid sequence, 208 residues long: Translation initiation factor 2 subunit beta (208 aa).

In terms of domain architecture, TRAM spans 145–203 (VIEEGETYELRIESVGSKGDGIAKVDKYLIFVPNTSKGEIVKAKVKKISGTLAFAEIVE).

It belongs to the eIF-2-beta/eIF-5 family. Heterotrimer composed of an alpha, a beta and a gamma chain.

Functionally, eIF-2 functions in the early steps of protein synthesis by forming a ternary complex with GTP and initiator tRNA. This Methanothrix thermoacetophila (strain DSM 6194 / JCM 14653 / NBRC 101360 / PT) (Methanosaeta thermophila) protein is Translation initiation factor 2 subunit beta.